The sequence spans 339 residues: Dihydroorotate dehydrogenase (quinone) (339 aa).

FMN contacts are provided by residues 61-65 (AGLDK) and Thr-85. Lys-65 contacts substrate. Substrate is bound at residue 110–114 (NRMGF). FMN is bound by residues Asn-138 and Asn-171. Residue Asn-171 participates in substrate binding. Ser-174 (nucleophile) is an active-site residue. Asn-176 provides a ligand contact to substrate. Residues Lys-216 and Thr-244 each contribute to the FMN site. 245-246 (NT) serves as a coordination point for substrate. FMN is bound by residues Gly-267, Gly-296, and 317–318 (YS).

This sequence belongs to the dihydroorotate dehydrogenase family. Type 2 subfamily. Monomer. It depends on FMN as a cofactor.

Its subcellular location is the cell membrane. It carries out the reaction (S)-dihydroorotate + a quinone = orotate + a quinol. The protein operates within pyrimidine metabolism; UMP biosynthesis via de novo pathway; orotate from (S)-dihydroorotate (quinone route): step 1/1. Functionally, catalyzes the conversion of dihydroorotate to orotate with quinone as electron acceptor. This Teredinibacter turnerae (strain ATCC 39867 / T7901) protein is Dihydroorotate dehydrogenase (quinone).